Here is a 254-residue protein sequence, read N- to C-terminus: Switch-activating protein 1 (254 aa).

Over residues 1–10 (MEAPKMELKS) the composition is skewed to basic and acidic residues. The disordered stretch occupies residues 1 to 30 (MEAPKMELKSYKRKNASLSPSSSPAKAQRT). Residues 16–25 (ASLSPSSSPA) are compositionally biased toward low complexity. Residues serine 17 and serine 19 each carry the phosphoserine modification. 4 tandem repeats follow at residues 221–224 (GVNM), 225–228 (GTNM), 229–232 (GANM), and 233–236 (GANM). The 4 X 4 AA tandem repeats of G-[ATV]-N-M stretch occupies residues 221–236 (GVNMGTNMGANMGANM).

Homodimer.

The protein localises to the nucleus. Binds to sequences required for mating-type switching. Makes a simultaneous contact with both the alpha and beta domains of the switch-activating site SAS1. Also binds to replication fork barrier 1 (RFB1) located within a 78 base pair sequence near the 3' end of the rRNA coding region. This leads to replication fork blockage. It binds the consensus sequence 5'-TA[AG]GCAGNTN[CT]AACG[AC]G-3'. Functionally, has a role in chromosome organization and integrity where it is involved in chromosome segregation. Has a role in sister chromatid cohesion and condensation. This chain is Switch-activating protein 1 (sap1), found in Schizosaccharomyces pombe (strain 972 / ATCC 24843) (Fission yeast).